We begin with the raw amino-acid sequence, 231 residues long: ABC transporter ATP-binding protein YtrE (231 aa).

Positions 4 to 231 (VQHIDHSFTI…VLKGGITVEV (228 aa)) constitute an ABC transporter domain. 42–49 (GRSGSGKS) is an ATP binding site.

Belongs to the ABC transporter superfamily. The complex is composed of 2 ATP-binding proteins (YtrB and YtrE), 2 transmembrane proteins (YtrC and YtrD) and a solute-binding protein (YtrF).

Its subcellular location is the cell membrane. In terms of biological role, part of the ABC transporter complex YtrBCDEF that plays a role in acetoin utilization during stationary phase and sporulation. The chain is ABC transporter ATP-binding protein YtrE (ytrE) from Bacillus subtilis (strain 168).